Here is a 368-residue protein sequence, read N- to C-terminus: WD repeat-containing protein RUP2 (368 aa).

WD repeat units follow at residues 38-77 (SASDVIGAIEFDPTDNIVATAGISRKIRFYGLPSLLRNNA), 97-138 (CTPA…PVFE), 141-184 (EHGG…EESV), 192-232 (ICRS…DPAL), 236-276 (GHTK…RTYE), 279-318 (VNNRNFVGLSVWRNGALFGCGSENNRVFVYDRRWGKPVWV), and 330-368 (SDKRFVSSVCWRQSGVDQCTLVAGGSDGVLQVYVGKRKP).

As to quaternary structure, interacts with UVR8.

Its subcellular location is the nucleus. The protein resides in the cytoplasm. It is found in the cytosol. Functionally, functions in association with RUP1 as repressor of UV-B-induced photomorphogenesis mediated by UVR8 and HY5. Plays a crucial negative feedback regulatory role downstream of UVR8-COP1 to inhibit UVR8 function, balance UV-B-specific responses and ensure normal plant growth. Is involved in the regulation of photoperiodic flowering and vegetative development. May act as negative regulator of photoperiodic flowering by suppressing flowering through the action of CONSTANS (CO) and FLOWERING LOCUS T (FT). The polypeptide is WD repeat-containing protein RUP2 (RUP2) (Arabidopsis thaliana (Mouse-ear cress)).